The following is a 202-amino-acid chain: uncharacterized protein (202 aa).

The first 18 residues, 1–18 (MKNRLLILSLLVSVPAFA), serve as a signal peptide directing secretion.

The protein to E.coli YebB.

This is an uncharacterized protein from Escherichia coli (strain K12).